The following is a 2316-amino-acid chain: Receptor-type tyrosine-protein phosphatase zeta (2316 aa).

A signal peptide spans 1–24 (MRILQSFLACVQLLCVCRLDWAYG). Residues 25 to 1637 (YYRQQRKLVE…LAEGLESEKK (1613 aa)) lie on the Extracellular side of the membrane. An Alpha-carbonic anhydrase domain is found at 36 to 300 (IGWSYTGALN…KFSRQVFSSY (265 aa)). 2 cysteine pairs are disulfide-bonded: C56/C240 and C133/C264. 7 N-linked (GlcNAc...) asparagine glycosylation sites follow: N105, N134, N223, N232, N324, N381, and N497. The 100-residue stretch at 314–413 (EPENVQADPE…LIVDMPTEDA (100 aa)) folds into the Fibronectin type-III domain. Disordered regions lie at residues 433-499 (YGKG…LNTS) and 518-537 (LPSQIGTNLPPHSVEGTSAS). N552 carries N-linked (GlcNAc...) asparagine glycosylation. S572 and S576 each carry phosphoserine. 2 disordered regions span residues 586–624 (KLDSGADDSSGSSPASSTVPFSTDNLSHGYTSSSDTPEA) and 636–720 (RNAL…EMPH). A compositionally biased stretch (low complexity) spans 592 to 602 (DDSSGSSPASS). S595 carries O-linked (Xyl...) (chondroitin sulfate) serine glycosylation. Over residues 603–621 (TVPFSTDNLSHGYTSSSDT) the composition is skewed to polar residues. N-linked (GlcNAc...) asparagine glycosylation occurs at N610. At S645 the chain carries Phosphoserine; alternate. O-linked (Xyl...) (chondroitin sulfate) serine; alternate glycosylation occurs at S645. S647 is modified (phosphoserine). Polar residues predominate over residues 666–675 (TDLTTQSETG). N-linked (GlcNAc...) asparagine glycosylation occurs at N685. Residues 699-711 (ETFSPDATASRGP) show a composition bias toward polar residues. N786 carries an N-linked (GlcNAc...) asparagine glycan. O-linked (Xyl...) (chondroitin sulfate) serine glycosylation occurs at S1005. N-linked (GlcNAc...) asparagine glycans are attached at residues N1025 and N1058. Disordered stretches follow at residues 1141 to 1172 (QASGDTWLKPGLSTNSEPALSDTASSEVSHPS), 1204 to 1228 (KTALPSGPRDPVLTETPMVEQSSSS), 1401 to 1521 (LLPS…DGRE), and 1545 to 1622 (TSDE…NSSH). The span at 1152–1172 (LSTNSEPALSDTASSEVSHPS) shows a compositional bias: polar residues. Positions 1401–1413 (LLPSKATSKPTHS) are enriched in polar residues. A compositionally biased stretch (acidic residues) spans 1425-1439 (EDGDDYDDDDYDDID). The N-linked (GlcNAc...) asparagine glycan is linked to N1463. Positions 1464–1478 (DSDTQESSLVDQSDP) are enriched in polar residues. 2 O-linked (Xyl...) (chondroitin sulfate) serine glycosylation sites follow: S1550 and S1552. Composition is skewed to polar residues over residues 1555–1569 (GTSDSLNDNETSTDF) and 1595–1609 (PRSSTPSVTSGHSGV). N1563 carries N-linked (GlcNAc...) asparagine glycosylation. A compositionally biased stretch (low complexity) spans 1610-1621 (SNSSEAEASNSS). N-linked (GlcNAc...) asparagine glycans are attached at residues N1611 and N1619. Residues 1638–1663 (AVIPLVIVSALTFICLVVLVGILIYW) traverse the membrane as a helical segment. Topologically, residues 1664-2316 (RKCFQTAHFY…NIAESLESLV (653 aa)) are cytoplasmic. Phosphothreonine is present on residues T1685 and T1688. Tyrosine-protein phosphatase domains follow at residues 1718–1993 (FTEE…LVEA) and 2024–2283 (LEKQ…VLSL). Substrate contacts are provided by residues D1902, 1934-1940 (CSAGVGR), and Q1978. The active-site Phosphocysteine intermediate is the C1934. A Phosphoserine modification is found at S2056.

The protein belongs to the protein-tyrosine phosphatase family. Receptor class 5 subfamily. Interacts with tenascin. Interacts with N-CAM and NG-CAM. The carbonic-anhydrase like domain interacts with CNTN1 (contactin). Interacts with PTN. Interaction with PTN promotes formation of homooligomers; oligomerization impairs phosphatase activity. Interacts (via chondroitin sulfate chains) with MDK (via C-terminal); this interaction is inhibited by PTN; this interaction promotes neuronal migration. As to expression, nervous tissue specific.

It is found in the cell membrane. Its subcellular location is the secreted. It catalyses the reaction O-phospho-L-tyrosyl-[protein] + H2O = L-tyrosyl-[protein] + phosphate. In terms of biological role, protein tyrosine phosphatase that negatively regulates oligodendrocyte precursor proliferation in the embryonic spinal cord. Required for normal differentiation of the precursor cells into mature, fully myelinating oligodendrocytes. May play a role in protecting oligondendrocytes against apoptosis. May play a role in the establishment of contextual memory, probably via the dephosphorylation of proteins that are part of important signaling cascades. Isoform 3 (phosphacan), previously designated 3F8 chondroitin sulfate proteoglycan or 3H1 keratan sulfate proteoglycan depending on the glycosylation status, is a soluble nervous tissue-specific proteoglycan. It is synthesized by glia and binds to neurons and to the neural cell adhesion molecules tenascin, N-CAM or NG-CAM but not to laminin and fibronectin. Phosphacan acts as a potent inhibitor of cell adhesion and neurite outgrowth. The protein is Receptor-type tyrosine-protein phosphatase zeta (Ptprz1) of Rattus norvegicus (Rat).